A 340-amino-acid chain; its full sequence is Putative inactive cytochrome P450 family member 4Z2 (340 aa).

Residues 1–9 (MEPSWLQEL) lie on the Cytoplasmic side of the membrane. Residues 10-30 (MAHPFLLLILLCMSLLLFQVI) traverse the membrane as a helical; Signal-anchor for type II membrane protein segment. Residues 31–340 (RLYQRRRWTI…AKYPEHQQRC (310 aa)) lie on the Lumenal side of the membrane.

It belongs to the cytochrome P450 family. Heme serves as cofactor. In terms of tissue distribution, detected at low levels in mammary gland and mammary carcinoma.

The protein localises to the membrane. This chain is Putative inactive cytochrome P450 family member 4Z2 (CYP4Z2P), found in Homo sapiens (Human).